An 809-amino-acid chain; its full sequence is Leucine--tRNA ligase (809 aa).

The 'HIGH' region signature appears at 40 to 50 (PYPSGRIHMGH). The short motif at 579–583 (KMSKS) is the 'KMSKS' region element. Lys582 serves as a coordination point for ATP.

Belongs to the class-I aminoacyl-tRNA synthetase family.

It is found in the cytoplasm. It carries out the reaction tRNA(Leu) + L-leucine + ATP = L-leucyl-tRNA(Leu) + AMP + diphosphate. This chain is Leucine--tRNA ligase, found in Campylobacter jejuni subsp. jejuni serotype O:23/36 (strain 81-176).